Here is a 583-residue protein sequence, read N- to C-terminus: Aspartate--tRNA ligase (583 aa).

L-aspartate is bound at residue Glu-174. The interval 198-201 (QITK) is aspartate. Arg-220 provides a ligand contact to L-aspartate. ATP-binding positions include 220–222 (RDE) and Gln-229. L-aspartate is bound at residue His-443. Glu-477 is an ATP binding site. An L-aspartate-binding site is contributed by Arg-484. ATP is bound at residue 529–532 (GLDR).

The protein belongs to the class-II aminoacyl-tRNA synthetase family. Type 1 subfamily. In terms of assembly, homodimer.

Its subcellular location is the cytoplasm. The enzyme catalyses tRNA(Asp) + L-aspartate + ATP = L-aspartyl-tRNA(Asp) + AMP + diphosphate. Functionally, catalyzes the attachment of L-aspartate to tRNA(Asp) in a two-step reaction: L-aspartate is first activated by ATP to form Asp-AMP and then transferred to the acceptor end of tRNA(Asp). This is Aspartate--tRNA ligase from Streptococcus agalactiae serotype V (strain ATCC BAA-611 / 2603 V/R).